Consider the following 312-residue polypeptide: Olfactory receptor 2T10 (312 aa).

The Extracellular portion of the chain corresponds to 1–25; it reads MRLANQTLGGDFFLLGIFSQISHPG. Asn5 is a glycosylation site (N-linked (GlcNAc...) asparagine). The helical transmembrane segment at 26–49 threads the bilayer; it reads RLCLLIFSIFLMAVSWNITLILLI. Over 50–57 the chain is Cytoplasmic; that stretch reads HIDSSLHT. A helical membrane pass occupies residues 58-79; the sequence is PMYFFINQLSLIDLTYISVTVP. Residues 80 to 100 are Extracellular-facing; sequence KMLVNQLAKDKTISVLGCGTQ. A disulfide bond links Cys97 and Cys189. A helical membrane pass occupies residues 101-120; that stretch reads MYFYLQLGGAECCLLAAMAY. Over 121 to 139 the chain is Cytoplasmic; the sequence is DRYVAICHPLRYSVLMSHR. The chain crosses the membrane as a helical span at residues 140–158; sequence VCLLLASGCWFVGSVDGFM. Residues 159–195 are Extracellular-facing; the sequence is LTPIAMSFPFCRSHEIQHFFCEVPAVLKLSCSDTSLY. Residues 196–219 traverse the membrane as a helical segment; the sequence is KIFMYLCCVIMLLIPVTVISVSYY. Residues 220–236 lie on the Cytoplasmic side of the membrane; the sequence is YIILTIHKMNSVEGRKK. A helical transmembrane segment spans residues 237 to 259; that stretch reads AFTTCSSHITVVSLFYGAAIYNY. Topologically, residues 260 to 272 are extracellular; that stretch reads MLPSSYQTPEKDM. A helical membrane pass occupies residues 273–292; that stretch reads MSSFFYTILTPVLNPIIYSF. At 293-312 the chain is on the cytoplasmic side; it reads RNKDVTRALKKMLSVQKPPY.

This sequence belongs to the G-protein coupled receptor 1 family.

The protein localises to the cell membrane. Its function is as follows. Odorant receptor. This Homo sapiens (Human) protein is Olfactory receptor 2T10 (OR2T10).